The sequence spans 473 residues: Photosystem II CP43 reaction center protein (473 aa).

A propeptide spanning residues 1–14 is cleaved from the precursor; the sequence is MKTLYSLRRFYHVE. An N-acetylthreonine modification is found at Thr15. Thr15 is modified (phosphothreonine). 5 consecutive transmembrane segments (helical) span residues 69-93, 134-155, 178-200, 255-275, and 291-312; these read LFEV…PHLA, LLGP…KDRN, KALY…RKIT, KPFA…LSYS, and WFNN…ASQA. A [CaMn4O5] cluster-binding site is contributed by Glu367. Residues 447–471 form a helical membrane-spanning segment; sequence RARAAAAGFEKGIDRDFEPVLSMTP.

This sequence belongs to the PsbB/PsbC family. PsbC subfamily. As to quaternary structure, PSII is composed of 1 copy each of membrane proteins PsbA, PsbB, PsbC, PsbD, PsbE, PsbF, PsbH, PsbI, PsbJ, PsbK, PsbL, PsbM, PsbT, PsbX, PsbY, PsbZ, Psb30/Ycf12, at least 3 peripheral proteins of the oxygen-evolving complex and a large number of cofactors. It forms dimeric complexes. Binds multiple chlorophylls and provides some of the ligands for the Ca-4Mn-5O cluster of the oxygen-evolving complex. It may also provide a ligand for a Cl- that is required for oxygen evolution. PSII binds additional chlorophylls, carotenoids and specific lipids. serves as cofactor.

The protein resides in the plastid. It is found in the chloroplast thylakoid membrane. Its function is as follows. One of the components of the core complex of photosystem II (PSII). It binds chlorophyll and helps catalyze the primary light-induced photochemical processes of PSII. PSII is a light-driven water:plastoquinone oxidoreductase, using light energy to abstract electrons from H(2)O, generating O(2) and a proton gradient subsequently used for ATP formation. This Crucihimalaya wallichii (Rock-cress) protein is Photosystem II CP43 reaction center protein.